The chain runs to 225 residues: UPF0173 metal-dependent hydrolase Aflv_0488 (225 aa).

The protein belongs to the UPF0173 family.

In Anoxybacillus flavithermus (strain DSM 21510 / WK1), this protein is UPF0173 metal-dependent hydrolase Aflv_0488.